Reading from the N-terminus, the 607-residue chain is UvrABC system protein C (607 aa).

A GIY-YIG domain is found at A16–I94. The UVR domain maps to Q203–V238.

This sequence belongs to the UvrC family. As to quaternary structure, interacts with UvrB in an incision complex.

The protein localises to the cytoplasm. In terms of biological role, the UvrABC repair system catalyzes the recognition and processing of DNA lesions. UvrC both incises the 5' and 3' sides of the lesion. The N-terminal half is responsible for the 3' incision and the C-terminal half is responsible for the 5' incision. This is UvrABC system protein C from Pseudomonas putida (strain W619).